Here is a 652-residue protein sequence, read N- to C-terminus: MPAVLPIKLNPSQMRPVAYRIFSKKHGLNLKSTGLETLTEIIGKNYGTEWRGAEAAKMMEEICRLWKEQEMGVFVEGKPLQELFDEITASKKAKEKARVQVVSKSVGLTGVEEIEDREGEPQVNVIREAAPSVDVVWKEFFKVISAFDQPLFHYNARQQRFEKRKTKPTLFANAQSASNMFLTRYHLVYNRLLRNDDTTDLKITSIRSLIGRQGEFSIFGMLSKNPEQKICLQDDTGRILLILAAGCKPDPGVYYPEGSFVICNGRYMKSGDAEVFVVITMGPPVAEKRQETITAYGNMDYLGLHGNPHGSVVRRIERQVEASMLAEEKRLVDQKVIVFGGDMYLDNPLTLKALQKVFSTIELEFQDSGTKKPLAMVFSGDFTSQYQPPHLYKKGFDKLEELFKEFSSIITGVKIIFVPGQRDPWTNTFPTQNAVVPLQPLPTTMINRVARLCGEDVSMSSNPCRMAYLTQDMVFYRDGLSERLRKCNLQLDSAKDDSDDSDDDIEIDNDEVMINDVVVNEPESSFDFGEGLSNLTRPVDISTPMASQVGPTNTLSAKEVESRKIVRTICDQGHLSPFNRHDRPVAWDYDETLWLSPLPTILFMVDTHAPKFSLRYEECMVVNPGPFLNRKIASWVEYDPSKKTVKERQLHI.

The protein belongs to the DNA polymerase epsilon subunit B family. In terms of assembly, heterotetramer. Consists of four subunits: POL2, DPB2, DPB3 and DPB4.

The protein localises to the nucleus. In terms of biological role, as accessory component of the DNA polymerase epsilon (DNA polymerase II) participates in chromosomal DNA replication. This is DNA polymerase epsilon subunit B (DPB2) from Yarrowia lipolytica (strain CLIB 122 / E 150) (Yeast).